The following is a 147-amino-acid chain: Hemoglobin subunit beta (147 aa).

N-acetylvaline is present on valine 2. The Globin domain maps to 3–147; that stretch reads HLTGEEKSAV…VANALAHKYH (145 aa). A Phosphothreonine modification is found at threonine 13. Position 45 is a phosphoserine (serine 45). Residue lysine 60 is modified to N6-acetyllysine. Histidine 64 provides a ligand contact to heme b. Residue lysine 83 is modified to N6-acetyllysine. Histidine 93 is a binding site for heme b. Cysteine 94 bears the S-nitrosocysteine mark. Lysine 145 is subject to N6-acetyllysine.

This sequence belongs to the globin family. As to quaternary structure, heterotetramer of two alpha chains and two beta chains. Red blood cells.

Functionally, involved in oxygen transport from the lung to the various peripheral tissues. This is Hemoglobin subunit beta (HBB) from Ateles paniscus (Black spider monkey).